Reading from the N-terminus, the 221-residue chain is Fanconi anemia core complex-associated protein 24 (221 aa).

As to quaternary structure, belongs to the multisubunit FA complex composed of FANCA, FANCB, FANCC, FANCE, FANCF, FANCG, FANCL/PHF9, FANCM and FAAP24. Interacts with FANCM.

It localises to the nucleus. Its function is as follows. Plays a role in DNA repair through recruitment of the FA core complex to damaged DNA. Regulates FANCD2 monoubiquitination upon DNA damage. Induces chromosomal instability as well as hypersensitivity to DNA cross-linking agents, when repressed. Targets FANCM/FAAP24 complex to the DNA, preferentially to single strand DNA. The chain is Fanconi anemia core complex-associated protein 24 from Mus musculus (Mouse).